Here is an 85-residue protein sequence, read N- to C-terminus: Large ribosomal subunit protein bL27 (85 aa).

Residues 1 to 25 (MAHKKAGSSSKNGRDSNPQYLGVKR) are disordered. Positions 7 to 19 (GSSSKNGRDSNPQ) are enriched in polar residues.

It belongs to the bacterial ribosomal protein bL27 family.

This chain is Large ribosomal subunit protein bL27, found in Micrococcus luteus (strain ATCC 4698 / DSM 20030 / JCM 1464 / CCM 169 / CCUG 5858 / IAM 1056 / NBRC 3333 / NCIMB 9278 / NCTC 2665 / VKM Ac-2230) (Micrococcus lysodeikticus).